Consider the following 186-residue polypeptide: Large ribosomal subunit protein uL5 (186 aa).

The protein belongs to the universal ribosomal protein uL5 family. As to quaternary structure, part of the 50S ribosomal subunit; part of the 5S rRNA/L5/L18/L25 subcomplex. Contacts the 5S rRNA and the P site tRNA. Forms a bridge to the 30S subunit in the 70S ribosome.

This is one of the proteins that bind and probably mediate the attachment of the 5S RNA into the large ribosomal subunit, where it forms part of the central protuberance. In the 70S ribosome it contacts protein S13 of the 30S subunit (bridge B1b), connecting the 2 subunits; this bridge is implicated in subunit movement. Contacts the P site tRNA; the 5S rRNA and some of its associated proteins might help stabilize positioning of ribosome-bound tRNAs. This is Large ribosomal subunit protein uL5 from Maricaulis maris (strain MCS10) (Caulobacter maris).